The primary structure comprises 310 residues: p-hydroxybenzoic acid efflux pump subunit AaeA (310 aa).

Residues 12 to 32 traverse the membrane as a helical segment; the sequence is VITLLLVIIAIVLIFRIWVFY.

The protein belongs to the membrane fusion protein (MFP) (TC 8.A.1) family.

It is found in the cell inner membrane. Its function is as follows. Forms an efflux pump with AaeB. The polypeptide is p-hydroxybenzoic acid efflux pump subunit AaeA (Erwinia tasmaniensis (strain DSM 17950 / CFBP 7177 / CIP 109463 / NCPPB 4357 / Et1/99)).